The following is a 232-amino-acid chain: Orotate phosphoribosyltransferase (232 aa).

Residues Arg107, Lys108, Lys111, and 133–141 (EDLTTDGGS) each bind 5-phospho-alpha-D-ribose 1-diphosphate. An orotate-binding site is contributed by Thr137.

Belongs to the purine/pyrimidine phosphoribosyltransferase family. PyrE subfamily. As to quaternary structure, homodimer. The cofactor is Mg(2+).

The enzyme catalyses orotidine 5'-phosphate + diphosphate = orotate + 5-phospho-alpha-D-ribose 1-diphosphate. The protein operates within pyrimidine metabolism; UMP biosynthesis via de novo pathway; UMP from orotate: step 1/2. In terms of biological role, catalyzes the transfer of a ribosyl phosphate group from 5-phosphoribose 1-diphosphate to orotate, leading to the formation of orotidine monophosphate (OMP). This is Orotate phosphoribosyltransferase from Cereibacter sphaeroides (strain ATCC 17023 / DSM 158 / JCM 6121 / CCUG 31486 / LMG 2827 / NBRC 12203 / NCIMB 8253 / ATH 2.4.1.) (Rhodobacter sphaeroides).